The chain runs to 126 residues: Copper resistance protein C (126 aa).

Residues 1 to 24 (MLLNRTSFVTLFAAGMLVSALAQA) form the signal peptide. His-25 contributes to the Cu(2+) binding site. Residues Met-64, Met-67, Met-70, His-72, and Met-75 each coordinate Cu(+). His-115 lines the Cu(2+) pocket.

This sequence belongs to the CopC family. As to quaternary structure, monomer.

The protein localises to the periplasm. With respect to regulation, the redox state of copper bound to CopC may act as a switch between the possible trafficking pathways of the metal ion. Copper-binding protein involved in copper resistance and homeostasis. Probably mediates copper resistance by sequestering the excess of copper in the periplasm. May act as a copper carrier in the oxidizing periplasmic space that exchanges either Cu(I) or Cu(II) with its putative partners CopA, CopB and CopD. The sequence is that of Copper resistance protein C from Pseudomonas syringae pv. tomato.